The following is a 1266-amino-acid chain: Neuronal-glial cell adhesion molecule (1266 aa).

Residues 1–20 (MALPMVGLLLLLLLGGPGAA) form the signal peptide. Residues 21–1130 (ITIPPEYGAH…PQPGGGVCTK (1110 aa)) lie on the Extracellular side of the membrane. Ig-like C2-type domains follow at residues 36–128 (PELT…NVIA), 135–221 (PKEK…KEPL), 236–322 (PRLL…HSVT), 327–413 (PYWV…AFLH), 418–506 (PLRM…ALLE), and 510–597 (PTRI…AQLR). Disulfide bonds link C58/C110, C154/C205, C260/C306, and C348/C397. N97 carries an N-linked (GlcNAc...) asparagine glycan. 5 N-linked (GlcNAc...) asparagine glycosylation sites follow: N288, N390, N434, N472, and N498. The cysteines at positions 441 and 490 are disulfide-linked. C532 and C581 are disulfide-bonded. 5 consecutive Fibronectin type-III domains span residues 603–698 (PSRD…TPPA), 700–804 (PERN…SGED), 809–930 (YPEN…TPEG), 934–1021 (PPEE…TKPE), and 1022–1118 (PPSP…TNGT). The disordered stretch occupies residues 685-710 (EHHAPSAPIETPPAAPERNPGGVHGE). N-linked (GlcNAc...) asparagine glycosylation is found at N712 and N819. The tract at residues 857-882 (SRRQAPPDPPQIPQSPAEDPPPFPPV) is disordered. The segment covering 862–881 (PPDPPQIPQSPAEDPPPFPP) has biased composition (pro residues). A Cell attachment site motif is present at residues 914 to 916 (RGD). A disordered region spans residues 1004–1025 (STPRERPALQTVGSTKPEPPSP). 4 N-linked (GlcNAc...) asparagine glycosylation sites follow: N1061, N1075, N1100, and N1116. A helical transmembrane segment spans residues 1131–1153 (GWFIGFVSSVVLLLLILLILCFI). Residues 1154–1266 (KRSKGGKYSV…ASPCAGPPLD (113 aa)) are Cytoplasmic-facing. The span at 1163–1195 (VKDKEDTQVDSEARPMKDETFGEYRSLESEAEK) shows a compositional bias: basic and acidic residues. A disordered region spans residues 1163 to 1266 (VKDKEDTQVD…ASPCAGPPLD (104 aa)). The segment covering 1199 to 1211 (SGSGAGSGVGSPG) has biased composition (gly residues).

This sequence belongs to the immunoglobulin superfamily. L1/neurofascin/NgCAM family. As to quaternary structure, binds to itself and to axonin 1. Brain.

The protein localises to the cell membrane. In terms of biological role, mediates the adhesion of neurons to neurons and neurons to glia. It is involved in neuronal migration, neurite fasciculation and outgrowth. This chain is Neuronal-glial cell adhesion molecule, found in Gallus gallus (Chicken).